The following is a 103-amino-acid chain: Large ribosomal subunit protein uL24 (103 aa).

It belongs to the universal ribosomal protein uL24 family. Part of the 50S ribosomal subunit.

Its function is as follows. One of two assembly initiator proteins, it binds directly to the 5'-end of the 23S rRNA, where it nucleates assembly of the 50S subunit. Functionally, one of the proteins that surrounds the polypeptide exit tunnel on the outside of the subunit. The protein is Large ribosomal subunit protein uL24 of Histophilus somni (strain 129Pt) (Haemophilus somnus).